A 536-amino-acid chain; its full sequence is Probable cytochrome P450 12a5, mitochondrial (536 aa).

Residue Cys482 coordinates heme.

This sequence belongs to the cytochrome P450 family. It depends on heme as a cofactor.

Its subcellular location is the mitochondrion membrane. This is Probable cytochrome P450 12a5, mitochondrial (Cyp12a5) from Drosophila melanogaster (Fruit fly).